A 172-amino-acid polypeptide reads, in one-letter code: Protein GrpE (172 aa).

Belongs to the GrpE family. As to quaternary structure, homodimer.

The protein resides in the cytoplasm. Functionally, participates actively in the response to hyperosmotic and heat shock by preventing the aggregation of stress-denatured proteins, in association with DnaK and GrpE. It is the nucleotide exchange factor for DnaK and may function as a thermosensor. Unfolded proteins bind initially to DnaJ; upon interaction with the DnaJ-bound protein, DnaK hydrolyzes its bound ATP, resulting in the formation of a stable complex. GrpE releases ADP from DnaK; ATP binding to DnaK triggers the release of the substrate protein, thus completing the reaction cycle. Several rounds of ATP-dependent interactions between DnaJ, DnaK and GrpE are required for fully efficient folding. This chain is Protein GrpE, found in Thermotoga petrophila (strain ATCC BAA-488 / DSM 13995 / JCM 10881 / RKU-1).